We begin with the raw amino-acid sequence, 549 residues long: MTVKSIRRAYHVIRTALHYGLDDLLPPKLTPWYFKLLRYCFFWLRNQHKDKVGGERLKLAMQELGPVYIKFGQMLSTRRDLLSDEWAEELAMLQDRVPPFDSAIARESIEKELNAPIERYFNDFDDTPLASASISQVHTATLKSNGAAVVLKVLRPDVEKKVHADLLLMSQAADFLERLLGANNRLRPAEVVEDYRTTIEGELNLKLEALNAIKLRNNFIDSNALYIPYMYEELCFTRLIVMERIDGIPVSDKVALEAQGTNLKLLAERGVELFFTQVFRDNFFHADMHPGNVFVSREHPNDPFYIGLDCGIMGTLTDEDKRYLAENFLAFFNRDYRRIAQLYIESGWVSADTDVGAFEQAVKVVCEPMFNKPLDEISFGHVLLELFRTARRFDMVVQPQLVLLEKTLLYIEGLGRQLYPQLDLWQTAKPFLEQWMAEQVGPKAMAAKVKQQLPYWAEHLPELPELIYDNLKIGRDLSKNQNKLLDRYLKHQQKAHKSNYLLITSAILVICGTILLNQDATLWPSYGSIGIGITLWVLGWRSRPKNRKI.

The Protein kinase domain maps to 123 to 501; that stretch reads DFDDTPLASA…QQKAHKSNYL (379 aa). Residues 129–137 and Lys-152 contribute to the ATP site; that span reads LASASISQV. Residue Asp-287 is the Proton acceptor of the active site. 2 consecutive transmembrane segments (helical) span residues 498-518 and 520-540; these read SNYL…LLNQ and ATLW…VLGW.

Belongs to the ABC1 family. UbiB subfamily.

It is found in the cell inner membrane. It functions in the pathway cofactor biosynthesis; ubiquinone biosynthesis [regulation]. In terms of biological role, is probably a protein kinase regulator of UbiI activity which is involved in aerobic coenzyme Q (ubiquinone) biosynthesis. The sequence is that of Probable protein kinase UbiB from Shewanella pealeana (strain ATCC 700345 / ANG-SQ1).